The following is a 596-amino-acid chain: mRNA export factor mex67 (596 aa).

Residues serine 128, serine 130, and serine 133 each carry the phosphoserine modification. LRR repeat units follow at residues 215-236 (DVIS…TTLA), 241-262 (KLLN…DPWS), and 263-282 (PKTK…PIVT). In terms of domain architecture, LRRCT spans 283–338 (TFANRAMDYQREMVSRFPKLRLLDGNSINSEIIASQSTVPFPVYQSFFDKVETEQI). The NTF2 domain occupies 338–499 (IVNSFLAAFF…ILIINDLLVI (162 aa)). One can recognise a TAP-C domain in the interval 543-596 (DTRQQIVLKIKAETGLNDYYAHMCCEQNNWDYNSALASFLELKSRNVIPAEAFS).

The protein belongs to the NXF family. As to quaternary structure, interacts with mlo3 and rae1.

It is found in the nucleus. Its subcellular location is the cytoplasm. In terms of biological role, involved in the export of mRNA from the nucleus to the cytoplasm. The sequence is that of mRNA export factor mex67 (mex67) from Schizosaccharomyces pombe (strain 972 / ATCC 24843) (Fission yeast).